A 455-amino-acid chain; its full sequence is Ribulose bisphosphate carboxylase large chain (455 aa).

An N6,N6,N6-trimethyllysine modification is found at Lys-5. The substrate site is built by Asn-114 and Thr-164. Lys-166 acts as the Proton acceptor in catalysis. Position 168 (Lys-168) interacts with substrate. Mg(2+) is bound by residues Lys-192, Asp-194, and Glu-195. Lys-192 carries the post-translational modification N6-carboxylysine. Catalysis depends on His-285, which acts as the Proton acceptor. Positions 286, 318, and 370 each coordinate substrate.

This sequence belongs to the RuBisCO large chain family. Type I subfamily. In terms of assembly, heterohexadecamer of 8 large chains and 8 small chains; disulfide-linked. The disulfide link is formed within the large subunit homodimers. Mg(2+) is required as a cofactor. In terms of processing, the disulfide bond which can form in the large chain dimeric partners within the hexadecamer appears to be associated with oxidative stress and protein turnover.

It is found in the plastid. It localises to the chloroplast. It catalyses the reaction 2 (2R)-3-phosphoglycerate + 2 H(+) = D-ribulose 1,5-bisphosphate + CO2 + H2O. The catalysed reaction is D-ribulose 1,5-bisphosphate + O2 = 2-phosphoglycolate + (2R)-3-phosphoglycerate + 2 H(+). Functionally, ruBisCO catalyzes two reactions: the carboxylation of D-ribulose 1,5-bisphosphate, the primary event in carbon dioxide fixation, as well as the oxidative fragmentation of the pentose substrate in the photorespiration process. Both reactions occur simultaneously and in competition at the same active site. This chain is Ribulose bisphosphate carboxylase large chain, found in Lupinus arcticus (Arctic lupine).